The sequence spans 250 residues: Cell division protein FtsQ (250 aa).

The Cytoplasmic portion of the chain corresponds to 1-11 (MWNNVRQLNLA). A helical transmembrane segment spans residues 12 to 32 (ASALYALLLLVLAAAGCYWLI). Topologically, residues 33 to 250 (QRPAFALREI…FLTDTDKGKK (218 aa)) are periplasmic. In terms of domain architecture, POTRA spans 37–106 (FALREIRIDG…NALAVTLEEY (70 aa)).

It belongs to the FtsQ/DivIB family. FtsQ subfamily. Part of a complex composed of FtsB, FtsL and FtsQ.

The protein localises to the cell inner membrane. In terms of biological role, essential cell division protein. May link together the upstream cell division proteins, which are predominantly cytoplasmic, with the downstream cell division proteins, which are predominantly periplasmic. May control correct divisome assembly. The chain is Cell division protein FtsQ from Burkholderia pseudomallei (strain K96243).